We begin with the raw amino-acid sequence, 307 residues long: tRNA dimethylallyltransferase (307 aa).

Residue 8-15 (GPTGSGKS) coordinates ATP. 10 to 15 (TGSGKS) contributes to the substrate binding site. The interaction with substrate tRNA stretch occupies residues 33–36 (DSLQ).

Belongs to the IPP transferase family. In terms of assembly, monomer. Mg(2+) serves as cofactor.

It carries out the reaction adenosine(37) in tRNA + dimethylallyl diphosphate = N(6)-dimethylallyladenosine(37) in tRNA + diphosphate. Functionally, catalyzes the transfer of a dimethylallyl group onto the adenine at position 37 in tRNAs that read codons beginning with uridine, leading to the formation of N6-(dimethylallyl)adenosine (i(6)A). The chain is tRNA dimethylallyltransferase from Solibacter usitatus (strain Ellin6076).